The chain runs to 120 residues: Large ribosomal subunit protein uL18 (120 aa).

Belongs to the universal ribosomal protein uL18 family. In terms of assembly, part of the 50S ribosomal subunit; part of the 5S rRNA/L5/L18/L25 subcomplex. Contacts the 5S and 23S rRNAs.

In terms of biological role, this is one of the proteins that bind and probably mediate the attachment of the 5S RNA into the large ribosomal subunit, where it forms part of the central protuberance. In Methylorubrum populi (strain ATCC BAA-705 / NCIMB 13946 / BJ001) (Methylobacterium populi), this protein is Large ribosomal subunit protein uL18.